The chain runs to 92 residues: Alpha-elapitoxin-Lh2a (92 aa).

The first 21 residues, 1–21 (MKTLLLTLVVVTIVCLDLGDS), serve as a signal peptide directing secretion. 5 disulfide bridges follow: Cys-24/Cys-41, Cys-34/Cys-62, Cys-47/Cys-51, Cys-66/Cys-77, and Cys-78/Cys-83.

Belongs to the three-finger toxin family. Long-chain subfamily. Type II alpha-neurotoxin sub-subfamily. In terms of tissue distribution, expressed by the venom gland.

It is found in the secreted. Binds with high affinity to muscular (alpha-1/CHRNA1) and neuronal (alpha-7/CHRNA7) nicotinic acetylcholine receptor (nAChR) and inhibits acetylcholine from binding to the receptor, thereby impairing neuromuscular and neuronal transmission. This is Alpha-elapitoxin-Lh2a from Hydrophis hardwickii (Hardwick's spine-bellied seasnake).